The following is a 357-amino-acid chain: Holliday junction branch migration complex subunit RuvB (357 aa).

Residues 1–27 form a disordered region; it reads MGRFDDAGAQDAEPDDRDVSPALTVGE. Residues 1–195 are large ATPase domain (RuvB-L); it reads MGRFDDAGAQ…FGFTAHMDFY (195 aa). ATP contacts are provided by residues L34, R35, G76, K79, T80, S81, 142-144, R185, Y195, and R232; that span reads EDF. Mg(2+) is bound at residue T80. The small ATPAse domain (RuvB-S) stretch occupies residues 196-266; that stretch reads EPAELERVLA…IAKAALEVYD (71 aa). The head domain (RuvB-H) stretch occupies residues 269–357; that stretch reads ELGLDRLDRA…TGLGQTGLFD (89 aa). The DNA site is built by R324 and R329.

The protein belongs to the RuvB family. Homohexamer. Forms an RuvA(8)-RuvB(12)-Holliday junction (HJ) complex. HJ DNA is sandwiched between 2 RuvA tetramers; dsDNA enters through RuvA and exits via RuvB. An RuvB hexamer assembles on each DNA strand where it exits the tetramer. Each RuvB hexamer is contacted by two RuvA subunits (via domain III) on 2 adjacent RuvB subunits; this complex drives branch migration. In the full resolvosome a probable DNA-RuvA(4)-RuvB(12)-RuvC(2) complex forms which resolves the HJ.

Its subcellular location is the cytoplasm. The enzyme catalyses ATP + H2O = ADP + phosphate + H(+). Functionally, the RuvA-RuvB-RuvC complex processes Holliday junction (HJ) DNA during genetic recombination and DNA repair, while the RuvA-RuvB complex plays an important role in the rescue of blocked DNA replication forks via replication fork reversal (RFR). RuvA specifically binds to HJ cruciform DNA, conferring on it an open structure. The RuvB hexamer acts as an ATP-dependent pump, pulling dsDNA into and through the RuvAB complex. RuvB forms 2 homohexamers on either side of HJ DNA bound by 1 or 2 RuvA tetramers; 4 subunits per hexamer contact DNA at a time. Coordinated motions by a converter formed by DNA-disengaged RuvB subunits stimulates ATP hydrolysis and nucleotide exchange. Immobilization of the converter enables RuvB to convert the ATP-contained energy into a lever motion, pulling 2 nucleotides of DNA out of the RuvA tetramer per ATP hydrolyzed, thus driving DNA branch migration. The RuvB motors rotate together with the DNA substrate, which together with the progressing nucleotide cycle form the mechanistic basis for DNA recombination by continuous HJ branch migration. Branch migration allows RuvC to scan DNA until it finds its consensus sequence, where it cleaves and resolves cruciform DNA. The chain is Holliday junction branch migration complex subunit RuvB from Mycobacterium sp. (strain JLS).